A 148-amino-acid chain; its full sequence is Large ribosomal subunit protein uL15 (148 aa).

A compositionally biased stretch (basic and acidic residues) spans 1–12 (MSDPIKLHDLRP). A disordered region spans residues 1-45 (MSDPIKLHDLRPAKGANKAKTRVGRGEASKGKTAGRGTKGTKARN).

This sequence belongs to the universal ribosomal protein uL15 family. Part of the 50S ribosomal subunit.

Binds to the 23S rRNA. This is Large ribosomal subunit protein uL15 from Corynebacterium urealyticum (strain ATCC 43042 / DSM 7109).